The sequence spans 117 residues: MTCSPLLLTLLIHCTGSWAQSVLTQPPSVSAAPGQKVTISCSGSSSNIGNNYVSWYQQLPGTAPKLLIYDNNKRPSGIPDRFSGSKSGTSATLGITGLQTGDEADYYCGTWDSSLSA.

Positions 1–19 (MTCSPLLLTLLIHCTGSWA) are cleaved as a signal peptide. Pyrrolidone carboxylic acid is present on glutamine 20. The tract at residues 20–44 (QSVLTQPPSVSAAPGQKVTISCSGS) is framework-1. The Ig-like domain maps to 20–117 (QSVLTQPPSV…CGTWDSSLSA (98 aa)). Cysteine 41 and cysteine 108 are disulfide-bonded. Positions 45-52 (SSNIGNNY) are complementarity-determining-1. Residues 53–69 (VSWYQQLPGTAPKLLIY) form a framework-2 region. Residues 70–72 (DNN) form a complementarity-determining-2 region. The tract at residues 73 to 108 (KRPSGIPDRFSGSKSGTSATLGITGLQTGDEADYYC) is framework-3. Residues 109 to 117 (GTWDSSLSA) are complementarity-determining-3.

As to quaternary structure, immunoglobulins are composed of two identical heavy chains and two identical light chains; disulfide-linked.

It is found in the secreted. Its subcellular location is the cell membrane. Its function is as follows. V region of the variable domain of immunoglobulin light chains that participates in the antigen recognition. Immunoglobulins, also known as antibodies, are membrane-bound or secreted glycoproteins produced by B lymphocytes. In the recognition phase of humoral immunity, the membrane-bound immunoglobulins serve as receptors which, upon binding of a specific antigen, trigger the clonal expansion and differentiation of B lymphocytes into immunoglobulins-secreting plasma cells. Secreted immunoglobulins mediate the effector phase of humoral immunity, which results in the elimination of bound antigens. The antigen binding site is formed by the variable domain of one heavy chain, together with that of its associated light chain. Thus, each immunoglobulin has two antigen binding sites with remarkable affinity for a particular antigen. The variable domains are assembled by a process called V-(D)-J rearrangement and can then be subjected to somatic hypermutations which, after exposure to antigen and selection, allow affinity maturation for a particular antigen. This chain is Immunoglobulin lambda variable 1-51, found in Homo sapiens (Human).